The following is a 201-amino-acid chain: Recombination protein RecR (201 aa).

The C4-type zinc-finger motif lies at 60–75 (CSCCGNVDTSDPCTIC). A Toprim domain is found at 83–178 (TTLIVVEDVS…RVTRLAHGVP (96 aa)).

The protein belongs to the RecR family.

May play a role in DNA repair. It seems to be involved in an RecBC-independent recombinational process of DNA repair. It may act with RecF and RecO. The chain is Recombination protein RecR from Brucella anthropi (strain ATCC 49188 / DSM 6882 / CCUG 24695 / JCM 21032 / LMG 3331 / NBRC 15819 / NCTC 12168 / Alc 37) (Ochrobactrum anthropi).